A 122-amino-acid polypeptide reads, in one-letter code: Small ribosomal subunit protein uS13 (122 aa).

Residues 95-122 (GLPVHGQRTHTNARTRKGPRRGAVGKKK) are disordered.

Belongs to the universal ribosomal protein uS13 family. In terms of assembly, part of the 30S ribosomal subunit. Forms a loose heterodimer with protein S19. Forms two bridges to the 50S subunit in the 70S ribosome.

Its function is as follows. Located at the top of the head of the 30S subunit, it contacts several helices of the 16S rRNA. In the 70S ribosome it contacts the 23S rRNA (bridge B1a) and protein L5 of the 50S subunit (bridge B1b), connecting the 2 subunits; these bridges are implicated in subunit movement. Contacts the tRNAs in the A and P-sites. This Desulfovibrio desulfuricans (strain ATCC 27774 / DSM 6949 / MB) protein is Small ribosomal subunit protein uS13.